Consider the following 594-residue polypeptide: 4-alpha-glucanotransferase DPE1, chloroplastic/amyloplastic (594 aa).

The N-terminal 37 residues, 1 to 37 (MATLSLPLPHLTQAIPARARPRPRPLRGIPARLLSCR), are a transit peptide targeting the chloroplast.

This sequence belongs to the disproportionating enzyme family.

Its subcellular location is the plastid. The protein resides in the chloroplast. It localises to the amyloplast. The catalysed reaction is Transfers a segment of a (1-&gt;4)-alpha-D-glucan to a new position in an acceptor, which may be glucose or a (1-&gt;4)-alpha-D-glucan.. Chloroplastic alpha-glucanotransferase involved in maltotriose metabolism. This chain is 4-alpha-glucanotransferase DPE1, chloroplastic/amyloplastic (DPE1), found in Oryza sativa subsp. japonica (Rice).